A 244-amino-acid polypeptide reads, in one-letter code: 1-(5-phosphoribosyl)-5-[(5-phosphoribosylamino)methylideneamino] imidazole-4-carboxamide isomerase (244 aa).

Aspartate 8 acts as the Proton acceptor in catalysis. Aspartate 129 (proton donor) is an active-site residue.

Belongs to the HisA/HisF family.

It is found in the cytoplasm. It catalyses the reaction 1-(5-phospho-beta-D-ribosyl)-5-[(5-phospho-beta-D-ribosylamino)methylideneamino]imidazole-4-carboxamide = 5-[(5-phospho-1-deoxy-D-ribulos-1-ylimino)methylamino]-1-(5-phospho-beta-D-ribosyl)imidazole-4-carboxamide. It participates in amino-acid biosynthesis; L-histidine biosynthesis; L-histidine from 5-phospho-alpha-D-ribose 1-diphosphate: step 4/9. The sequence is that of 1-(5-phosphoribosyl)-5-[(5-phosphoribosylamino)methylideneamino] imidazole-4-carboxamide isomerase from Bradyrhizobium sp. (strain ORS 278).